A 194-amino-acid polypeptide reads, in one-letter code: ATP-dependent Clp protease proteolytic subunit (194 aa).

Catalysis depends on S97, which acts as the Nucleophile. H122 is a catalytic residue.

It belongs to the peptidase S14 family. Fourteen ClpP subunits assemble into 2 heptameric rings which stack back to back to give a disk-like structure with a central cavity, resembling the structure of eukaryotic proteasomes.

Its subcellular location is the cytoplasm. The enzyme catalyses Hydrolysis of proteins to small peptides in the presence of ATP and magnesium. alpha-casein is the usual test substrate. In the absence of ATP, only oligopeptides shorter than five residues are hydrolyzed (such as succinyl-Leu-Tyr-|-NHMec, and Leu-Tyr-Leu-|-Tyr-Trp, in which cleavage of the -Tyr-|-Leu- and -Tyr-|-Trp bonds also occurs).. In terms of biological role, cleaves peptides in various proteins in a process that requires ATP hydrolysis. Has a chymotrypsin-like activity. Plays a major role in the degradation of misfolded proteins. This Campylobacter jejuni subsp. jejuni serotype O:6 (strain 81116 / NCTC 11828) protein is ATP-dependent Clp protease proteolytic subunit.